A 62-amino-acid polypeptide reads, in one-letter code: DNA-binding protein 7 (62 aa).

Belongs to the 7 kDa DNA-binding/endoribonuclease P2 family. In terms of assembly, monomer.

It localises to the cytoplasm. Functionally, can constrain negative DNA supercoils. May be involved in maintaining the integrity of the genome at high temperature. The sequence is that of DNA-binding protein 7 from Metallosphaera cuprina (strain Ar-4).